We begin with the raw amino-acid sequence, 281 residues long: sn-glycerol-3-phosphate transport system permease protein UgpE (281 aa).

6 helical membrane passes run L16 to L36, F85 to F105, F113 to V133, L142 to F162, A202 to I222, and W247 to A267. The ABC transmembrane type-1 domain maps to M77–M268.

The protein belongs to the binding-protein-dependent transport system permease family. UgpAE subfamily. The complex is composed of two ATP-binding proteins (UgpC), two transmembrane proteins (UgpA and UgpE) and a solute-binding protein (UgpB).

Its subcellular location is the cell inner membrane. Functionally, part of the ABC transporter complex UgpBAEC involved in sn-glycerol-3-phosphate (G3P) import. Probably responsible for the translocation of the substrate across the membrane. The sequence is that of sn-glycerol-3-phosphate transport system permease protein UgpE (ugpE) from Salmonella choleraesuis (strain SC-B67).